The primary structure comprises 121 residues: Large ribosomal subunit protein bL20 (121 aa).

The protein belongs to the bacterial ribosomal protein bL20 family.

Its function is as follows. Binds directly to 23S ribosomal RNA and is necessary for the in vitro assembly process of the 50S ribosomal subunit. It is not involved in the protein synthesizing functions of that subunit. The sequence is that of Large ribosomal subunit protein bL20 from Polynucleobacter asymbioticus (strain DSM 18221 / CIP 109841 / QLW-P1DMWA-1) (Polynucleobacter necessarius subsp. asymbioticus).